Reading from the N-terminus, the 310-residue chain is Methionyl-tRNA formyltransferase (310 aa).

Serine 109 to proline 112 contacts (6S)-5,6,7,8-tetrahydrofolate.

Belongs to the Fmt family.

It catalyses the reaction L-methionyl-tRNA(fMet) + (6R)-10-formyltetrahydrofolate = N-formyl-L-methionyl-tRNA(fMet) + (6S)-5,6,7,8-tetrahydrofolate + H(+). In terms of biological role, attaches a formyl group to the free amino group of methionyl-tRNA(fMet). The formyl group appears to play a dual role in the initiator identity of N-formylmethionyl-tRNA by promoting its recognition by IF2 and preventing the misappropriation of this tRNA by the elongation apparatus. The polypeptide is Methionyl-tRNA formyltransferase (Staphylococcus epidermidis (strain ATCC 35984 / DSM 28319 / BCRC 17069 / CCUG 31568 / BM 3577 / RP62A)).